The primary structure comprises 194 residues: Thymidine kinase (194 aa).

ATP-binding positions include 15–22 (GPMFSGKS) and 89–92 (DEAH). Catalysis depends on Glu-90, which acts as the Proton acceptor. 4 residues coordinate Zn(2+): Cys-146, Cys-149, Cys-178, and Cys-181.

This sequence belongs to the thymidine kinase family. Homotetramer.

It is found in the cytoplasm. The enzyme catalyses thymidine + ATP = dTMP + ADP + H(+). The polypeptide is Thymidine kinase (Metamycoplasma arthritidis (strain 158L3-1) (Mycoplasma arthritidis)).